Consider the following 440-residue polypeptide: Chromosomal replication initiator protein DnaA (440 aa).

The tract at residues 1-93 (MNVQLNEIWN…QTPVKPVAQE (93 aa)) is domain I, interacts with DnaA modulators. Positions 94–101 (YTEDSNMS) are domain II. Residues 102 to 318 (FLNPKYTFDT…GALNRVIAYS (217 aa)) form a domain III, AAA+ region region. The ATP site is built by glycine 146, glycine 148, lysine 149, and threonine 150. Positions 319 to 440 (TLTENIINVD…EEIKKNITGG (122 aa)) are domain IV, binds dsDNA.

Belongs to the DnaA family. As to quaternary structure, oligomerizes as a right-handed, spiral filament on DNA at oriC.

The protein localises to the cytoplasm. Its function is as follows. Plays an essential role in the initiation and regulation of chromosomal replication. ATP-DnaA binds to the origin of replication (oriC) to initiate formation of the DNA replication initiation complex once per cell cycle. Binds the DnaA box (a 9 base pair repeat at the origin) and separates the double-stranded (ds)DNA. Forms a right-handed helical filament on oriC DNA; dsDNA binds to the exterior of the filament while single-stranded (ss)DNA is stabiized in the filament's interior. The ATP-DnaA-oriC complex binds and stabilizes one strand of the AT-rich DNA unwinding element (DUE), permitting loading of DNA polymerase. After initiation quickly degrades to an ADP-DnaA complex that is not apt for DNA replication. Binds acidic phospholipids. In Ruminiclostridium cellulolyticum (strain ATCC 35319 / DSM 5812 / JCM 6584 / H10) (Clostridium cellulolyticum), this protein is Chromosomal replication initiator protein DnaA.